Here is a 354-residue protein sequence, read N- to C-terminus: MTSSSSNRPFSHRSPNTFLTYPQCPEQPEIISQRIWDLCSHWTPLYIICAREAHRDGNQCLHALIQTEKPVRTTDSRFFDIDGFHPNIQSAISPNKVRDYITKEPLALFERGTFIPRKKSFLGNSSKGNSDKKPSKDEIMRDIISHATSKQEYLSMVQKSLPYDWSTKLQYFEYSANKLFPDIQEEFINPHPTSEPDLLCNESIKDWLQPNIYQADYGTRKRSLYIVGPTRTGKSTWARSLGRHNYWQNNVDWSSYNEDTIYNIVDDIPFKYCPCWKQLVGCQKEFVVNPKYGKKKKVQMKSKPTIILANSDEDWMKEMTPGQLEYFEANCMIYVMQPGEKWYSPPELPPTEEV.

Positions 11 to 114 (SHRSPNTFLT…PLALFERGTF (104 aa)) constitute a CRESS-DNA virus Rep endonuclease domain. Residues 18-21 (FLTY) carry the RCR-1 motif. Residues glutamate 52 and histidine 62 each contribute to the a divalent metal cation site. The short motif at 60-65 (CLHALI) is the RCR-2 element. Catalysis depends on tyrosine 100, which acts as the For DNA cleavage activity. The short motif at 100–103 (YITK) is the RCR-3 element. Residue glutamate 104 coordinates a divalent metal cation. The tract at residues 175-187 (SANKLFPDIQEEF) is oligomerization. 228–235 (GPTRTGKS) lines the ATP pocket. The interval 251 to 269 (VDWSSYNEDTIYNIVDDIP) is transactivation. Positions 291–302 (KYGKKKKVQMKS) match the Nuclear localization signal motif.

This sequence belongs to the geminiviridae Rep protein family. As to quaternary structure, homooligomer. Rep binds to repeated DNA motifs (iterons). Forms the O-complex, which is a Rep-DNA complex involved in the initiation of RCR. Part of the C- and V-complexes which are RepA-Rep-DNA complexes involved in the c-sense and v-sense transcription. It depends on Mg(2+) as a cofactor. Requires Mn(2+) as cofactor.

It is found in the host nucleus. Its function is as follows. Essential for the replication of viral ssDNA. The closed circular ssDNA genome is first converted to a superhelical dsDNA. Rep binds a specific region at the genome origin of replication. It introduces an endonucleolytic nick within the conserved sequence 5'-TAATATTAC-3' in the intergenic region of the genome present in all geminiviruses, thereby initiating the rolling circle replication (RCR). Following cleavage, binds covalently to the 5'-phosphate of DNA as a tyrosyl ester. The cleavage gives rise to a free 3'-OH that serves as a primer for the cellular DNA polymerase. The polymerase synthesizes the (+) strand DNA by rolling circle mechanism. After one round of replication, a Rep-catalyzed nucleotidyl transfer reaction releases a circular single-stranded virus genome, thereby terminating the replication. Displays origin-specific DNA cleavage, nucleotidyl transferase, ATPase and helicase activities. Acts as an inhibitor of C-sense gene transcription. This Maize streak virus genotype C (isolate Set) (MSV) protein is Replication-associated protein.